We begin with the raw amino-acid sequence, 502 residues long: Probable RNA exonuclease C9B6.11c (502 aa).

Residues 338–379 (SELEEKNASTKTENDSNEDDKEECQSSSTSSVPESTASTPKK) form a disordered region. Positions 341-351 (EEKNASTKTEN) are enriched in basic and acidic residues. The span at 363-376 (SSSTSSVPESTAST) shows a compositional bias: low complexity.

It belongs to the CCR4/nocturin family.

Its subcellular location is the cytoplasm. The protein resides in the nucleus. This is Probable RNA exonuclease C9B6.11c from Schizosaccharomyces pombe (strain 972 / ATCC 24843) (Fission yeast).